Reading from the N-terminus, the 146-residue chain is uncharacterized protein (146 aa).

An N-acetyltransferase domain is found at 1-120 (MTDKFDANDE…TILKWEKNMD (120 aa)).

This sequence belongs to the acetyltransferase family.

This is an uncharacterized protein from Streptococcus pyogenes serotype M6 (strain ATCC BAA-946 / MGAS10394).